A 418-amino-acid chain; its full sequence is 6-methylpretetramide 4-monooxygenase (418 aa).

FAD-binding positions include 15-44 (DVCV…LVER) and 289-299 (WARDGLLLIGD).

The protein belongs to the PheA/TfdB FAD monooxygenase family. FAD serves as cofactor.

The catalysed reaction is 6-methylpretetramide + NADPH + O2 + 2 H(+) = 4-hydroxy-6-methylpretetramide + NADP(+) + H2O. Its pathway is antibiotic biosynthesis; oxytetracycline biosynthesis. Involved in the biosynthesis of the tetracycline antibiotic, oxytetracycline. Catalyzes the C-4 hydroxylation of 6-methylpretetramide to yield the intermediate 4-hydroxyl-6-methylpretetramid, which is subsequently hydroxylated by OxyL to yield 4-keto-anhydrotetracycline. OxyE serves as the ancillary enzyme to assist OxyL in the hydroxylation of C-4. The protein is 6-methylpretetramide 4-monooxygenase of Streptomyces rimosus.